The primary structure comprises 212 residues: Leucyl/phenylalanyl-tRNA--protein transferase (212 aa).

Belongs to the L/F-transferase family.

The protein localises to the cytoplasm. It catalyses the reaction N-terminal L-lysyl-[protein] + L-leucyl-tRNA(Leu) = N-terminal L-leucyl-L-lysyl-[protein] + tRNA(Leu) + H(+). It carries out the reaction N-terminal L-arginyl-[protein] + L-leucyl-tRNA(Leu) = N-terminal L-leucyl-L-arginyl-[protein] + tRNA(Leu) + H(+). The enzyme catalyses L-phenylalanyl-tRNA(Phe) + an N-terminal L-alpha-aminoacyl-[protein] = an N-terminal L-phenylalanyl-L-alpha-aminoacyl-[protein] + tRNA(Phe). Functionally, functions in the N-end rule pathway of protein degradation where it conjugates Leu, Phe and, less efficiently, Met from aminoacyl-tRNAs to the N-termini of proteins containing an N-terminal arginine or lysine. This Christiangramia forsetii (strain DSM 17595 / CGMCC 1.15422 / KT0803) (Gramella forsetii) protein is Leucyl/phenylalanyl-tRNA--protein transferase.